The primary structure comprises 80 residues: uncharacterized protein (80 aa).

The segment at G57–I80 is disordered.

This is an uncharacterized protein from Bacillus subtilis (strain 168).